A 271-amino-acid chain; its full sequence is GTP cyclohydrolase FolE2 (271 aa).

This sequence belongs to the GTP cyclohydrolase IV family.

The enzyme catalyses GTP + H2O = 7,8-dihydroneopterin 3'-triphosphate + formate + H(+). Its pathway is cofactor biosynthesis; 7,8-dihydroneopterin triphosphate biosynthesis; 7,8-dihydroneopterin triphosphate from GTP: step 1/1. Converts GTP to 7,8-dihydroneopterin triphosphate. The polypeptide is GTP cyclohydrolase FolE2 (Geotalea uraniireducens (strain Rf4) (Geobacter uraniireducens)).